A 627-amino-acid polypeptide reads, in one-letter code: Threonine--tRNA ligase (627 aa).

The catalytic stretch occupies residues 221–523; the sequence is DHRKLGRELG…LIEHFAGDFP (303 aa). Cysteine 319, histidine 370, and histidine 500 together coordinate Zn(2+).

It belongs to the class-II aminoacyl-tRNA synthetase family. In terms of assembly, homodimer. Zn(2+) serves as cofactor.

The protein localises to the cytoplasm. The catalysed reaction is tRNA(Thr) + L-threonine + ATP = L-threonyl-tRNA(Thr) + AMP + diphosphate + H(+). In terms of biological role, catalyzes the attachment of threonine to tRNA(Thr) in a two-step reaction: L-threonine is first activated by ATP to form Thr-AMP and then transferred to the acceptor end of tRNA(Thr). Also edits incorrectly charged L-seryl-tRNA(Thr). The protein is Threonine--tRNA ligase of Gloeobacter violaceus (strain ATCC 29082 / PCC 7421).